A 409-amino-acid chain; its full sequence is Homoserine O-succinyltransferase (409 aa).

The AB hydrolase-1 domain maps to 43–380 (NAIVVCHALN…PHGHDAFLLD (338 aa)). Ser-149 functions as the Nucleophile in the catalytic mechanism. Residue Arg-219 coordinates substrate. The segment at 244 to 268 (TLPAARGSLPPEGTDPTRGGPASDR) is disordered. Active-site residues include Asp-341 and His-374. Asp-375 contributes to the substrate binding site.

This sequence belongs to the AB hydrolase superfamily. MetX family. As to quaternary structure, homodimer.

The protein localises to the cytoplasm. It carries out the reaction L-homoserine + succinyl-CoA = O-succinyl-L-homoserine + CoA. The protein operates within amino-acid biosynthesis; L-methionine biosynthesis via de novo pathway; O-succinyl-L-homoserine from L-homoserine: step 1/1. Functionally, transfers a succinyl group from succinyl-CoA to L-homoserine, forming succinyl-L-homoserine. The chain is Homoserine O-succinyltransferase from Comamonas testosteroni (strain DSM 14576 / KF-1) (Pseudomonas testosteroni).